The primary structure comprises 360 residues: Blue-light-activated histidine kinase 1 (360 aa).

Residues 38 to 109 (LFLETTQQTR…KLREGIAAER (72 aa)) enclose the PAS domain. At cysteine 85 the chain carries S-4a-FMN cysteine. Residues 109–163 (RYTVVDLLNYRKDGIPFWNAVHVGPIYGEDGTLQYFYGSQWDITDIVAERRKAET) form the PAC domain. Residue histidine 173 is modified to Phosphohistidine; by autocatalysis. Residues 260 to 303 (RSVTALGLALHELATNAVKYGALSVDAGRVEISWSREDGDVTLV) are HWE histidine kinase domain.

Post-translationally, FMN binds covalently to cysteine after exposure to blue light and this bond is spontaneously broken in the dark.

It catalyses the reaction ATP + protein L-histidine = ADP + protein N-phospho-L-histidine.. Functionally, photosensitive kinase that is involved in increased bacterial virulence upon exposure to light. In Erythrobacter litoralis (strain HTCC2594), this protein is Blue-light-activated histidine kinase 1.